The following is a 298-amino-acid chain: Super small secreted glycoprotein (298 aa).

An N-terminal signal peptide occupies residues 1–32 (MGVTGILQLPRDRFKRTSFFLWVIILFQRTFS). N-linked (GlcNAc...) asparagine; by host glycosylation occurs at asparagine 40. 2 disulfide bridges follow: cysteine 108-cysteine 135 and cysteine 121-cysteine 147. Asparagine 204, asparagine 228, asparagine 238, asparagine 257, and asparagine 268 each carry an N-linked (GlcNAc...) asparagine; by host glycan.

Belongs to the filoviruses glycoprotein family.

The protein resides in the secreted. This chain is Super small secreted glycoprotein (GP), found in Epomops franqueti (Franquet's epauletted fruit bat).